A 384-amino-acid polypeptide reads, in one-letter code: Glucose-1-phosphate adenylyltransferase (384 aa).

Alpha-D-glucose 1-phosphate contacts are provided by residues Y103, G168, 183 to 184 (EK), and S194.

It belongs to the bacterial/plant glucose-1-phosphate adenylyltransferase family. In terms of assembly, homotetramer.

It catalyses the reaction alpha-D-glucose 1-phosphate + ATP + H(+) = ADP-alpha-D-glucose + diphosphate. It participates in glycan biosynthesis; glycogen biosynthesis. Functionally, involved in the biosynthesis of ADP-glucose, a building block required for the elongation reactions to produce glycogen. Catalyzes the reaction between ATP and alpha-D-glucose 1-phosphate (G1P) to produce pyrophosphate and ADP-Glc. This is Glucose-1-phosphate adenylyltransferase from Fusobacterium nucleatum subsp. nucleatum (strain ATCC 25586 / DSM 15643 / BCRC 10681 / CIP 101130 / JCM 8532 / KCTC 2640 / LMG 13131 / VPI 4355).